The sequence spans 161 residues: Small ribosomal subunit protein uS9 (161 aa).

Belongs to the universal ribosomal protein uS9 family.

The polypeptide is Small ribosomal subunit protein uS9 (Bartonella henselae (strain ATCC 49882 / DSM 28221 / CCUG 30454 / Houston 1) (Rochalimaea henselae)).